A 318-amino-acid polypeptide reads, in one-letter code: Peptidyl-prolyl cis-trans isomerase CPR4 (318 aa).

The signal sequence occupies residues 1–20 (MWLKSLLLCLYSLVLCQVHA). Residues 55-225 (YFDPVSKSMK…HELRFLYFVL (171 aa)) form the PPIase cyclophilin-type domain. N-linked (GlcNAc...) asparagine glycosylation is present at asparagine 166. Residues 286 to 303 (ISRALMCLTVLGLCFIAY) traverse the membrane as a helical segment.

It localises to the membrane. It catalyses the reaction [protein]-peptidylproline (omega=180) = [protein]-peptidylproline (omega=0). In terms of biological role, PPIases accelerate the folding of proteins. It catalyzes the cis-trans isomerization of proline imidic peptide bonds in oligopeptides. The sequence is that of Peptidyl-prolyl cis-trans isomerase CPR4 (CPR4) from Saccharomyces cerevisiae (strain ATCC 204508 / S288c) (Baker's yeast).